A 639-amino-acid polypeptide reads, in one-letter code: CTTNBP2 N-terminal-like protein (639 aa).

Positions 87–285 form a coiled coil; that stretch reads MKQCKNMQER…DLEASHQHSS (199 aa). A phosphoserine mark is found at serine 284 and serine 285. Disordered regions lie at residues 387–430, 463–490, and 511–609; these read VENG…PCSS, RHKF…LSPT, and RFTS…AASL. 2 stretches are compositionally biased toward low complexity: residues 407 to 430 and 467 to 477; these read PSSG…PCSS and QSQADQDQQAS. Residues serine 481, serine 488, serine 523, serine 527, serine 560, serine 563, and serine 568 each carry the phosphoserine modification. Residues 511 to 529 are compositionally biased toward polar residues; the sequence is RFTSQQGPIKPVSPNSSPF. Residues threonine 570 and threonine 590 each carry the phosphothreonine modification. Positions 587 to 600 are enriched in low complexity; the sequence is PGLTPSPSATTPLT. Serine 592 bears the Phosphoserine mark.

In terms of assembly, interacts with CTTN/cortactin; this interaction may redistribute CTTN to stress fibers. May form homomers. Associates with the core of STRIPAK complexes composed of PP2A catalytic and scaffolding subunits, the striatins (PP2A regulatory subunits), the striatin-associated proteins MOB4, STRIP1 and STRIP2, PDCD10 and members of the STE20 kinases, such as STK24 and STK26.

It is found in the cell projection. It localises to the lamellipodium. Its subcellular location is the cytoplasm. The protein resides in the cytoskeleton. The protein localises to the stress fiber. Functionally, regulates lamellipodial actin dynamics in a CTTN-dependent manner. Associates with core striatin-interacting phosphatase and kinase (STRIPAK) complex to form CTTNBP2NL-STRIPAK complexes. STRIPAK complexes have critical roles in protein (de)phosphorylation and are regulators of multiple signaling pathways including Hippo, MAPK, nuclear receptor and cytoskeleton remodeling. Different types of STRIPAK complexes are involved in a variety of biological processes such as cell growth, differentiation, apoptosis, metabolism and immune regulation. The chain is CTTNBP2 N-terminal-like protein (CTTNBP2NL) from Pongo abelii (Sumatran orangutan).